A 20-amino-acid chain; its full sequence is Mite allergen Der p 6 (20 aa).

The Peptidase S1 domain maps to 1–20; sequence AIGXQPAAEAEAPFQISLMK.

The protein belongs to the peptidase S1 family.

The protein localises to the secreted. In terms of biological role, protease that shows specificity similar to chymotrypsin. This chain is Mite allergen Der p 6 (DERP6), found in Dermatophagoides pteronyssinus (European house dust mite).